The chain runs to 483 residues: MAKTNAVAGFNALNGVELNLFTNEELKAIHYATMEVLMNPGVQVSDPEARQIFKENGCEVDEETKVVKIPEYIVRKALQLAPSRFVLWGRDKKYNTVQECGGKVHWTCFGTGVKMCKYQDGKYVTVDSVEQDIADIAKLCDWAENIDYFSLPVSARDVAGQGAQDVHETFTPIVNTSKHYHHIDPVGENVEYYWDIVKAYYGGDEEEARKKPIFSMLLCPTSPLELSVNACQVIIKGARLGIPVNVLSMAMSGGSSPVYLAGTLVTHNAEVLSGIVLAQLTAPGSKVWYGSSTTTFDLKKGTAPVGSPELGLISAAVAKLAQFYGLPSFVAGSOSDAKIPDSQAGHEKTITTLLPALAGANTIYGAGMLELGMTFSMEQLVIDNDIISMVKKAMEGIPVSEETLSVESIQKVGIGNNFLALKQTRQLIDYPSSPMLIDRRMYGDWAASGSKDLAAVAHEKVVDVLKNHQVKPIDADILKDMQA.

Pyl334 is a non-standard amino acid (pyrrolysine).

The protein belongs to the trimethylamine methyltransferase family. As to quaternary structure, can form a complex with MttC.

The enzyme catalyses Co(I)-[trimethylamine-specific corrinoid protein] + trimethylamine + H(+) = methyl-Co(III)-[trimethylamine-specific corrinoid protein] + dimethylamine. Its pathway is one-carbon metabolism; methanogenesis from trimethylamine. In terms of biological role, catalyzes the transfer of a methyl group from trimethylamine to the corrinoid cofactor of MttC. The chain is Trimethylamine methyltransferase MttB (mttB) from Methanosarcina thermophila.